A 150-amino-acid chain; its full sequence is D-aminoacyl-tRNA deacylase (150 aa).

A Gly-cisPro motif, important for rejection of L-amino acids motif is present at residues 136–137 (GP).

Belongs to the DTD family. In terms of assembly, homodimer.

The protein localises to the cytoplasm. It catalyses the reaction glycyl-tRNA(Ala) + H2O = tRNA(Ala) + glycine + H(+). It carries out the reaction a D-aminoacyl-tRNA + H2O = a tRNA + a D-alpha-amino acid + H(+). An aminoacyl-tRNA editing enzyme that deacylates mischarged D-aminoacyl-tRNAs. Also deacylates mischarged glycyl-tRNA(Ala), protecting cells against glycine mischarging by AlaRS. Acts via tRNA-based rather than protein-based catalysis; rejects L-amino acids rather than detecting D-amino acids in the active site. By recycling D-aminoacyl-tRNA to D-amino acids and free tRNA molecules, this enzyme counteracts the toxicity associated with the formation of D-aminoacyl-tRNA entities in vivo and helps enforce protein L-homochirality. The polypeptide is D-aminoacyl-tRNA deacylase (Staphylococcus saprophyticus subsp. saprophyticus (strain ATCC 15305 / DSM 20229 / NCIMB 8711 / NCTC 7292 / S-41)).